Consider the following 263-residue polypeptide: 4-hydroxy-tetrahydrodipicolinate reductase (263 aa).

NAD(+) contacts are provided by residues 7 to 12 (GFKGRM), 96 to 98 (GTT), and 122 to 125 (APNF). Catalysis depends on His-152, which acts as the Proton donor/acceptor. His-153 is a binding site for (S)-2,3,4,5-tetrahydrodipicolinate. Lys-156 acts as the Proton donor in catalysis. 162-163 (GT) is a binding site for (S)-2,3,4,5-tetrahydrodipicolinate.

The protein belongs to the DapB family.

The protein localises to the cytoplasm. It carries out the reaction (S)-2,3,4,5-tetrahydrodipicolinate + NAD(+) + H2O = (2S,4S)-4-hydroxy-2,3,4,5-tetrahydrodipicolinate + NADH + H(+). It catalyses the reaction (S)-2,3,4,5-tetrahydrodipicolinate + NADP(+) + H2O = (2S,4S)-4-hydroxy-2,3,4,5-tetrahydrodipicolinate + NADPH + H(+). The protein operates within amino-acid biosynthesis; L-lysine biosynthesis via DAP pathway; (S)-tetrahydrodipicolinate from L-aspartate: step 4/4. Its function is as follows. Catalyzes the conversion of 4-hydroxy-tetrahydrodipicolinate (HTPA) to tetrahydrodipicolinate. The polypeptide is 4-hydroxy-tetrahydrodipicolinate reductase (Listeria innocua serovar 6a (strain ATCC BAA-680 / CLIP 11262)).